A 1193-amino-acid polypeptide reads, in one-letter code: Nucleolar protein 6 (1193 aa).

Disordered stretches follow at residues 1-69 (MRFV…TKNV) and 1137-1193 (KREQ…KVLK). Composition is skewed to basic and acidic residues over residues 31–46 (AGDHSDLDEPKPKIAK) and 1151–1161 (DANKAEEESKP). Ser-35 carries the post-translational modification Phosphoserine. Positions 1162–1184 (KPKKHRQRKGTGKKALPKRKRLI) are enriched in basic residues.

The protein belongs to the NRAP family. As to quaternary structure, part of the small subunit (SSU) processome, composed of more than 70 proteins and the RNA chaperone small nucleolar RNA (snoRNA) U3. In terms of tissue distribution, expressed in nurse cells at stages 9-10 of oogenesis and exported to the oocyte.

The protein resides in the nucleus. The protein localises to the nucleolus. It localises to the chromosome. In terms of biological role, part of the small subunit (SSU) processome, first precursor of the small eukaryotic ribosomal subunit. During the assembly of the SSU processome in the nucleolus, many ribosome biogenesis factors, an RNA chaperone and ribosomal proteins associate with the nascent pre-rRNA and work in concert to generate RNA folding, modifications, rearrangements and cleavage as well as targeted degradation of pre-ribosomal RNA by the RNA exosome. In Drosophila melanogaster (Fruit fly), this protein is Nucleolar protein 6.